The sequence spans 654 residues: Acetyl-coenzyme A synthetase (654 aa).

Residues 190–193 and threonine 313 each bind CoA; that span reads RGGK. ATP-binding positions include 389–391, 413–418, aspartate 504, and arginine 519; these read GEP and DTWWQT. CoA is bound at residue serine 527. ATP is bound at residue arginine 530. Mg(2+) is bound by residues valine 541, histidine 543, and valine 546. N6-acetyllysine is present on lysine 613.

The protein belongs to the ATP-dependent AMP-binding enzyme family. Mg(2+) serves as cofactor. Post-translationally, acetylated. Deacetylation by the SIR2-homolog deacetylase activates the enzyme.

The enzyme catalyses acetate + ATP + CoA = acetyl-CoA + AMP + diphosphate. In terms of biological role, catalyzes the conversion of acetate into acetyl-CoA (AcCoA), an essential intermediate at the junction of anabolic and catabolic pathways. AcsA undergoes a two-step reaction. In the first half reaction, AcsA combines acetate with ATP to form acetyl-adenylate (AcAMP) intermediate. In the second half reaction, it can then transfer the acetyl group from AcAMP to the sulfhydryl group of CoA, forming the product AcCoA. This is Acetyl-coenzyme A synthetase from Leptospira biflexa serovar Patoc (strain Patoc 1 / Ames).